The primary structure comprises 193 residues: Superoxide dismutase [Fe] (193 aa).

Histidine 27, histidine 74, aspartate 157, and histidine 161 together coordinate Fe cation.

This sequence belongs to the iron/manganese superoxide dismutase family. As to quaternary structure, homodimer. Fe cation is required as a cofactor.

It catalyses the reaction 2 superoxide + 2 H(+) = H2O2 + O2. Functionally, destroys superoxide anion radicals which are normally produced within the cells and which are toxic to biological systems. Partially complements double sodA-sodB deletions in E.coli. This chain is Superoxide dismutase [Fe], found in Pseudomonas aeruginosa (strain ATCC 15692 / DSM 22644 / CIP 104116 / JCM 14847 / LMG 12228 / 1C / PRS 101 / PAO1).